An 844-amino-acid chain; its full sequence is Translation initiation factor IF-2 (844 aa).

The span at 1–11 (MTEDVKADVPK) shows a compositional bias: basic and acidic residues. 2 disordered regions span residues 1-35 (MTEDVKADVPKKLSIQRRTKTTVSGTTTSGKSKAV) and 79-248 (RLEA…KGAA). A compositionally biased stretch (low complexity) spans 21–33 (TTVSGTTTSGKSK). Residues 79-161 (RLEAEKAATK…AAEEAKRYAE (83 aa)) show a composition bias toward basic and acidic residues. The span at 162–175 (ADDSDNESSSEDYS) shows a compositional bias: acidic residues. A compositionally biased stretch (basic residues) spans 200 to 210 (RGKNKVAKAKK). The segment covering 211–237 (GGRDDENSKNSKNERESNRKNQKDAKF) has biased composition (basic and acidic residues). The tr-type G domain occupies 343–513 (TRAPVVTIMG…LLQSEVLELT (171 aa)). Residues 352–359 (GHVDHGKT) form a G1 region. 352-359 (GHVDHGKT) is a GTP binding site. Residues 377–381 (GITQH) are G2. The tract at residues 399–402 (DTPG) is G3. GTP contacts are provided by residues 399-403 (DTPGH) and 453-456 (NKID). The interval 453–456 (NKID) is G4. Residues 489–491 (SAK) form a G5 region.

The protein belongs to the TRAFAC class translation factor GTPase superfamily. Classic translation factor GTPase family. IF-2 subfamily.

It is found in the cytoplasm. In terms of biological role, one of the essential components for the initiation of protein synthesis. Protects formylmethionyl-tRNA from spontaneous hydrolysis and promotes its binding to the 30S ribosomal subunits. Also involved in the hydrolysis of GTP during the formation of the 70S ribosomal complex. The polypeptide is Translation initiation factor IF-2 (Haemophilus influenzae (strain PittGG)).